The primary structure comprises 519 residues: Mannosyl-oligosaccharide alpha-1,2-mannosidase (519 aa).

The first 22 residues, 1–22, serve as a signal peptide directing secretion; the sequence is MKGSPVLAVCAAALTLIPSVVA. Asn-187 is a glycosylation site (N-linked (GlcNAc...) asparagine). Cysteines 337 and 366 form a disulfide. Glu-380 acts as the Proton donor in catalysis. N-linked (GlcNAc...) asparagine glycosylation occurs at Asn-443. Thr-507 is a Ca(2+) binding site.

It belongs to the glycosyl hydrolase 47 family. Monomer. Ca(2+) serves as cofactor. Mg(2+) is required as a cofactor.

It localises to the secreted. It catalyses the reaction N(4)-(alpha-D-Man-(1-&gt;2)-alpha-D-Man-(1-&gt;2)-alpha-D-Man-(1-&gt;3)-[alpha-D-Man-(1-&gt;2)-alpha-D-Man-(1-&gt;3)-[alpha-D-Man-(1-&gt;2)-alpha-D-Man-(1-&gt;6)]-alpha-D-Man-(1-&gt;6)]-beta-D-Man-(1-&gt;4)-beta-D-GlcNAc-(1-&gt;4)-beta-D-GlcNAc)-L-asparaginyl-[protein] (N-glucan mannose isomer 9A1,2,3B1,2,3) + 4 H2O = N(4)-(alpha-D-Man-(1-&gt;3)-[alpha-D-Man-(1-&gt;3)-[alpha-D-Man-(1-&gt;6)]-alpha-D-Man-(1-&gt;6)]-beta-D-Man-(1-&gt;4)-beta-D-GlcNAc-(1-&gt;4)-beta-D-GlcNAc)-L-asparaginyl-[protein] (N-glucan mannose isomer 5A1,2) + 4 beta-D-mannose. The catalysed reaction is N(4)-(alpha-D-Man-(1-&gt;2)-alpha-D-Man-(1-&gt;2)-alpha-D-Man-(1-&gt;3)-[alpha-D-Man-(1-&gt;3)-[alpha-D-Man-(1-&gt;2)-alpha-D-Man-(1-&gt;6)]-alpha-D-Man-(1-&gt;6)]-beta-D-Man-(1-&gt;4)-beta-D-GlcNAc-(1-&gt;4)-beta-D-GlcNAc)-L-asparaginyl-[protein] (N-glucan mannose isomer 8A1,2,3B1,3) + 3 H2O = N(4)-(alpha-D-Man-(1-&gt;3)-[alpha-D-Man-(1-&gt;3)-[alpha-D-Man-(1-&gt;6)]-alpha-D-Man-(1-&gt;6)]-beta-D-Man-(1-&gt;4)-beta-D-GlcNAc-(1-&gt;4)-beta-D-GlcNAc)-L-asparaginyl-[protein] (N-glucan mannose isomer 5A1,2) + 3 beta-D-mannose. It functions in the pathway protein modification; protein glycosylation. Its function is as follows. Alpha-mannosidase involved in the maturation of Asn-linked oligosaccharides. Progressively trims alpha-1,2-linked mannose residues from Man(9)GlcNAc(2) to produce Man(5)GlcNAc(2). The protein is Mannosyl-oligosaccharide alpha-1,2-mannosidase of Coccidioides posadasii (strain RMSCC 757 / Silveira) (Valley fever fungus).